The sequence spans 66 residues: Large ribosomal subunit protein bL35 (66 aa).

Basic residues-rich tracts occupy residues 1–15 (MSKL…KRFK) and 22–43 (ILHK…RKRR). The tract at residues 1–43 (MSKLKTRSSAAKRFKVTATGKILHKKAGKRHNLSKKSESRKRR) is disordered.

It belongs to the bacterial ribosomal protein bL35 family.

The protein is Large ribosomal subunit protein bL35 of Dictyoglomus turgidum (strain DSM 6724 / Z-1310).